We begin with the raw amino-acid sequence, 242 residues long: Small ribosomal subunit protein uS2 (242 aa).

The protein belongs to the universal ribosomal protein uS2 family.

The sequence is that of Small ribosomal subunit protein uS2 from Shewanella baltica (strain OS223).